Reading from the N-terminus, the 230-residue chain is Demethylmenaquinone methyltransferase (230 aa).

Residues Thr62, Asp80, 100-101, and Ser117 each bind S-adenosyl-L-methionine; that span reads DG.

This sequence belongs to the class I-like SAM-binding methyltransferase superfamily. MenG/UbiE family.

It catalyses the reaction a 2-demethylmenaquinol + S-adenosyl-L-methionine = a menaquinol + S-adenosyl-L-homocysteine + H(+). The protein operates within quinol/quinone metabolism; menaquinone biosynthesis; menaquinol from 1,4-dihydroxy-2-naphthoate: step 2/2. In terms of biological role, methyltransferase required for the conversion of demethylmenaquinol (DMKH2) to menaquinol (MKH2). The chain is Demethylmenaquinone methyltransferase from Corynebacterium glutamicum (strain R).